Reading from the N-terminus, the 663-residue chain is UvrABC system protein B (663 aa).

Residues 1 to 10 (MIDKRDDKPF) are compositionally biased toward basic and acidic residues. Positions 1–23 (MIDKRDDKPFKLKSKYKPSGDQP) are disordered. A Helicase ATP-binding domain is found at 31 to 271 (DNIEGGEKAQ…EQSIAKIQAE (241 aa)). 44–51 (GATGTGKT) contributes to the ATP binding site. The short motif at 97 to 120 (YYDYYQPEAYVPSSDTYIEKDSSV) is the Beta-hairpin element. A Helicase C-terminal domain is found at 435 to 601 (QIDDLLGEIN…TIKKDIRGLI (167 aa)). The 36-residue stretch at 627 to 662 (KEAINALQKQMQEAAELLDFELAAQMRDLILELKLM) folds into the UVR domain.

Belongs to the UvrB family. As to quaternary structure, forms a heterotetramer with UvrA during the search for lesions. Interacts with UvrC in an incision complex.

It is found in the cytoplasm. Functionally, the UvrABC repair system catalyzes the recognition and processing of DNA lesions. A damage recognition complex composed of 2 UvrA and 2 UvrB subunits scans DNA for abnormalities. Upon binding of the UvrA(2)B(2) complex to a putative damaged site, the DNA wraps around one UvrB monomer. DNA wrap is dependent on ATP binding by UvrB and probably causes local melting of the DNA helix, facilitating insertion of UvrB beta-hairpin between the DNA strands. Then UvrB probes one DNA strand for the presence of a lesion. If a lesion is found the UvrA subunits dissociate and the UvrB-DNA preincision complex is formed. This complex is subsequently bound by UvrC and the second UvrB is released. If no lesion is found, the DNA wraps around the other UvrB subunit that will check the other stand for damage. This chain is UvrABC system protein B, found in Streptococcus pyogenes serotype M5 (strain Manfredo).